The primary structure comprises 66 residues: Sodium/potassium-transporting ATPase subunit gamma (66 aa).

The chain crosses the membrane as a helical span at residues 29 to 46; the sequence is GGLIFAGLAFIVGLLILL.

It belongs to the FXYD family. In terms of assembly, regulatory subunit of the sodium/potassium-transporting ATPase which is composed of a catalytic alpha subunit, an auxiliary non-catalytic beta subunit and an additional regulatory subunit. In terms of tissue distribution, expressed in the distal convoluted tubule in the kidney. Found on basolateral membranes of nephron epithelial cells.

Its subcellular location is the membrane. Functionally, may be involved in forming the receptor site for cardiac glycoside binding or may modulate the transport function of the sodium ATPase. This Homo sapiens (Human) protein is Sodium/potassium-transporting ATPase subunit gamma (FXYD2).